Reading from the N-terminus, the 121-residue chain is Ribonuclease P protein component (121 aa).

This sequence belongs to the RnpA family. In terms of assembly, consists of a catalytic RNA component (M1 or rnpB) and a protein subunit.

It carries out the reaction Endonucleolytic cleavage of RNA, removing 5'-extranucleotides from tRNA precursor.. RNaseP catalyzes the removal of the 5'-leader sequence from pre-tRNA to produce the mature 5'-terminus. It can also cleave other RNA substrates such as 4.5S RNA. The protein component plays an auxiliary but essential role in vivo by binding to the 5'-leader sequence and broadening the substrate specificity of the ribozyme. The sequence is that of Ribonuclease P protein component from Geobacillus thermodenitrificans (strain NG80-2).